We begin with the raw amino-acid sequence, 72 residues long: Conotoxin Gla(2)-TxVI/B (72 aa).

The first 19 residues, 1-19, serve as a signal peptide directing secretion; sequence MEKLIILLLVAAVLMSTQA. The propeptide occupies 20–44; the sequence is LFQEKRTMKKIDFLSKGKADAEKQR. 3 disulfide bridges follow: Cys-48–Cys-62, Cys-55–Cys-66, and Cys-61–Cys-70. Glu-56 is subject to 4-carboxyglutamate. Pro-58 bears the 4-hydroxyproline mark. Ser-71 carries the serine amide modification.

In terms of processing, brominated at one of the Trp residues. Expressed by the venom duct.

It localises to the secreted. This is Conotoxin Gla(2)-TxVI/B from Conus textile (Cloth-of-gold cone).